Consider the following 825-residue polypeptide: NT-3 growth factor receptor (825 aa).

Positions 1 to 31 (MDVSLCPAKCSFWRIFLLGSVWLDYVGSVLA) are cleaved as a signal peptide. 2 disulfides stabilise this stretch: cysteine 32/cysteine 38 and cysteine 36/cysteine 45. The Extracellular portion of the chain corresponds to 32-429 (CPANCVCSKT…TVTHKPEEDT (398 aa)). Asparagine 68, asparagine 72, and asparagine 79 each carry an N-linked (GlcNAc...) asparagine glycan. 2 LRR repeats span residues 104-125 (GLQK…AFAK) and 128-149 (HLRY…LFQT). N-linked (GlcNAc...) asparagine glycans are attached at residues asparagine 133 and asparagine 163. In terms of domain architecture, LRRCT spans 160-209 (NFFNCSCDIRWMQLWQEQGEAKLNSQNLYCINTDGSQLPLFRMNISQCDL). 2 disulfide bridges follow: cysteine 164-cysteine 189 and cysteine 166-cysteine 207. Residues asparagine 203, asparagine 218, asparagine 232, asparagine 259, asparagine 267, asparagine 272, and asparagine 294 are each glycosylated (N-linked (GlcNAc...) asparagine). Ig-like C2-type domains are found at residues 210–300 (PEIS…VALT) and 309–382 (SLEE…IAKN). Cysteine 231 and cysteine 284 are joined by a disulfide. A disulfide bridge connects residues cysteine 320 and cysteine 362. N-linked (GlcNAc...) asparagine glycosylation is found at asparagine 375 and asparagine 388. A helical transmembrane segment spans residues 430–453 (FGVSIAVGLAAFACVLLVVLFVMI). Topologically, residues 454–825 (NKYGRRSKFG…ATPIYLDILG (372 aa)) are cytoplasmic. At serine 493 the chain carries Phosphoserine. Phosphotyrosine; by autocatalysis is present on tyrosine 516. Residues 538-825 (IVLKRELGEG…ATPIYLDILG (288 aa)) enclose the Protein kinase domain. ATP contacts are provided by residues 544-552 (LGEGAFGKV) and lysine 572. The Proton acceptor role is filled by aspartate 679. Residues tyrosine 705, tyrosine 709, and tyrosine 710 each carry the phosphotyrosine; by autocatalysis modification.

This sequence belongs to the protein kinase superfamily. Tyr protein kinase family. Insulin receptor subfamily. In terms of assembly, exists in a dynamic equilibrium between monomeric (low affinity) and dimeric (high affinity) structures. Binds SH2B2. Interacts with SQSTM1 and KIDINS220. Interacts with PTPRS. Interacts with MAPK8IP3/JIP3. Post-translationally, ligand-mediated auto-phosphorylation.

It localises to the membrane. The catalysed reaction is L-tyrosyl-[protein] + ATP = O-phospho-L-tyrosyl-[protein] + ADP + H(+). Its function is as follows. Receptor tyrosine kinase involved in nervous system and probably heart development. Upon binding of its ligand NTF3/neurotrophin-3, NTRK3 autophosphorylates and activates different signaling pathways, including the phosphatidylinositol 3-kinase/AKT and the MAPK pathways, that control cell survival and differentiation. This Pan troglodytes (Chimpanzee) protein is NT-3 growth factor receptor (NTRK3).